A 162-amino-acid polypeptide reads, in one-letter code: MKLDQVARSLLLKEFVSGFFLAMKYFLKPKATINYPFEMGHRGPRFRGEHALRRYPNGEERCIACKLCEAICPAQAITIEAGPRRNDGTRRTTRYDIDMVKCIYCGMCQEACPVDAIVEGPNFEFSVETREELLYDKQKLLENGDRWEREIARNIAIDAPYR.

2 consecutive 4Fe-4S ferredoxin-type domains span residues 52 to 82 and 93 to 122; these read LRRY…IEAG and TRYD…EGPN. [4Fe-4S] cluster is bound by residues cysteine 62, cysteine 65, cysteine 68, cysteine 72, cysteine 102, cysteine 105, cysteine 108, and cysteine 112.

This sequence belongs to the complex I 23 kDa subunit family. NDH-1 is composed of 14 different subunits. Subunits NuoA, H, J, K, L, M, N constitute the membrane sector of the complex. It depends on [4Fe-4S] cluster as a cofactor.

It is found in the cell inner membrane. The catalysed reaction is a quinone + NADH + 5 H(+)(in) = a quinol + NAD(+) + 4 H(+)(out). In terms of biological role, NDH-1 shuttles electrons from NADH, via FMN and iron-sulfur (Fe-S) centers, to quinones in the respiratory chain. The immediate electron acceptor for the enzyme in this species is believed to be ubiquinone. Couples the redox reaction to proton translocation (for every two electrons transferred, four hydrogen ions are translocated across the cytoplasmic membrane), and thus conserves the redox energy in a proton gradient. The chain is NADH-quinone oxidoreductase subunit I from Methylorubrum populi (strain ATCC BAA-705 / NCIMB 13946 / BJ001) (Methylobacterium populi).